The sequence spans 151 residues: Large ribosomal subunit protein uL13 (151 aa).

The interval 126–151 (YPGSNHPHEAQKPEKLTIQTIPGGER) is disordered. A compositionally biased stretch (basic and acidic residues) spans 131 to 140 (HPHEAQKPEK).

This sequence belongs to the universal ribosomal protein uL13 family. Part of the 50S ribosomal subunit.

This protein is one of the early assembly proteins of the 50S ribosomal subunit, although it is not seen to bind rRNA by itself. It is important during the early stages of 50S assembly. The polypeptide is Large ribosomal subunit protein uL13 (Trichodesmium erythraeum (strain IMS101)).